We begin with the raw amino-acid sequence, 360 residues long: UDP-N-acetylglucosamine--N-acetylmuramyl-(pentapeptide) pyrophosphoryl-undecaprenol N-acetylglucosamine transferase (360 aa).

UDP-N-acetyl-alpha-D-glucosamine-binding positions include 15–17, Asn124, Arg165, Ser191, and Gln285; that span reads TGG.

Belongs to the glycosyltransferase 28 family. MurG subfamily.

Its subcellular location is the cell inner membrane. The enzyme catalyses di-trans,octa-cis-undecaprenyl diphospho-N-acetyl-alpha-D-muramoyl-L-alanyl-D-glutamyl-meso-2,6-diaminopimeloyl-D-alanyl-D-alanine + UDP-N-acetyl-alpha-D-glucosamine = di-trans,octa-cis-undecaprenyl diphospho-[N-acetyl-alpha-D-glucosaminyl-(1-&gt;4)]-N-acetyl-alpha-D-muramoyl-L-alanyl-D-glutamyl-meso-2,6-diaminopimeloyl-D-alanyl-D-alanine + UDP + H(+). Its pathway is cell wall biogenesis; peptidoglycan biosynthesis. Functionally, cell wall formation. Catalyzes the transfer of a GlcNAc subunit on undecaprenyl-pyrophosphoryl-MurNAc-pentapeptide (lipid intermediate I) to form undecaprenyl-pyrophosphoryl-MurNAc-(pentapeptide)GlcNAc (lipid intermediate II). The polypeptide is UDP-N-acetylglucosamine--N-acetylmuramyl-(pentapeptide) pyrophosphoryl-undecaprenol N-acetylglucosamine transferase (Gloeothece citriformis (strain PCC 7424) (Cyanothece sp. (strain PCC 7424))).